Here is a 338-residue protein sequence, read N- to C-terminus: Fructose-1,6-bisphosphatase class 1 1 (338 aa).

Glutamate 91, aspartate 113, leucine 115, and aspartate 116 together coordinate Mg(2+). Substrate contacts are provided by residues 116 to 119 (DGSS), asparagine 208, and lysine 274. Residue glutamate 280 participates in Mg(2+) binding.

Belongs to the FBPase class 1 family. In terms of assembly, homotetramer. Mg(2+) serves as cofactor.

The protein resides in the cytoplasm. It carries out the reaction beta-D-fructose 1,6-bisphosphate + H2O = beta-D-fructose 6-phosphate + phosphate. Its pathway is carbohydrate biosynthesis; gluconeogenesis. This Cupriavidus metallidurans (strain ATCC 43123 / DSM 2839 / NBRC 102507 / CH34) (Ralstonia metallidurans) protein is Fructose-1,6-bisphosphatase class 1 1.